The following is a 368-amino-acid chain: tRNA-specific 2-thiouridylase MnmA (368 aa).

ATP is bound by residues 10 to 17 (AMSGGVDS) and Met36. Residue Cys108 is the Nucleophile of the active site. Cys108 and Cys206 are oxidised to a cystine. Residue Gly132 participates in ATP binding. Residues 156 to 158 (KDQ) form an interaction with tRNA region. Catalysis depends on Cys206, which acts as the Cysteine persulfide intermediate. The interval 312 to 313 (RY) is interaction with tRNA.

It belongs to the MnmA/TRMU family.

The protein localises to the cytoplasm. It carries out the reaction S-sulfanyl-L-cysteinyl-[protein] + uridine(34) in tRNA + AH2 + ATP = 2-thiouridine(34) in tRNA + L-cysteinyl-[protein] + A + AMP + diphosphate + H(+). Functionally, catalyzes the 2-thiolation of uridine at the wobble position (U34) of tRNA, leading to the formation of s(2)U34. The sequence is that of tRNA-specific 2-thiouridylase MnmA from Natranaerobius thermophilus (strain ATCC BAA-1301 / DSM 18059 / JW/NM-WN-LF).